Consider the following 224-residue polypeptide: UPF0758 protein CBUD_1789 (224 aa).

Residues glutamine 102–leucine 224 form the MPN domain. Residues histidine 173, histidine 175, and aspartate 186 each contribute to the Zn(2+) site. A JAMM motif motif is present at residues histidine 173–aspartate 186.

Belongs to the UPF0758 family.

The chain is UPF0758 protein CBUD_1789 from Coxiella burnetii (strain Dugway 5J108-111).